The primary structure comprises 406 residues: Calsequestrin-1 (406 aa).

The N-terminal stretch at 1–34 (MRATDRMGARAVSKLRLALLFVLVLGTPRSGVQG) is a signal peptide. Tyr-43 bears the Phosphotyrosine mark. Ser-81 is modified (phosphoserine). Thr-124 bears the Phosphothreonine mark. Phosphoserine is present on Ser-216. Asn-350 is a glycosylation site (N-linked (GlcNAc...) asparagine). The segment at 382 to 406 (EGEINTEDDDDDDDDDDDDDDDDDD) is disordered.

The protein belongs to the calsequestrin family. As to quaternary structure, monomer; increases in response to a depletion of intracellular calcium. Homodimer. Homotetramer and homopolymer. Can form linear homooligomers. Ca(2+) ions promote oligomerization. Interacts (via C-terminal end and preferentially with the monomeric form) with STIM1; this interaction increases in response to a depletion of intracellular calcium, decreases both STIM1 aggregation and clustering, interaction of STIM1 with ORAI1 and store-operated Ca(2+) entry (SOCE) activity. Interacts with ASPH and TRDN. Post-translationally, N-glycosylated. In terms of tissue distribution, detected in skeletal muscle and in smooth muscle from vas deferens, aorta and stomach (at protein level).

The protein resides in the endoplasmic reticulum. The protein localises to the sarcoplasmic reticulum. Its subcellular location is the sarcoplasmic reticulum lumen. It localises to the sarcoplasmic reticulum membrane. It is found in the mitochondrion matrix. Its function is as follows. Calsequestrin is a high-capacity, moderate affinity, calcium-binding protein and thus acts as an internal calcium store in muscle. Calcium ions are bound by clusters of acidic residues at the protein surface, often at the interface between subunits. Can bind around 80 Ca(2+) ions. Regulates the release of lumenal Ca(2+) via the calcium release channel RYR1; this plays an important role in triggering muscle contraction. Negatively regulates store-operated Ca(2+) entry (SOCE) activity. This is Calsequestrin-1 (Casq1) from Rattus norvegicus (Rat).